Reading from the N-terminus, the 244-residue chain is tRNA pseudouridine synthase A (244 aa).

Asp52 acts as the Nucleophile in catalysis. Tyr110 lines the substrate pocket.

This sequence belongs to the tRNA pseudouridine synthase TruA family. Homodimer.

The catalysed reaction is uridine(38/39/40) in tRNA = pseudouridine(38/39/40) in tRNA. In terms of biological role, formation of pseudouridine at positions 38, 39 and 40 in the anticodon stem and loop of transfer RNAs. The sequence is that of tRNA pseudouridine synthase A from Acetivibrio thermocellus (strain ATCC 27405 / DSM 1237 / JCM 9322 / NBRC 103400 / NCIMB 10682 / NRRL B-4536 / VPI 7372) (Clostridium thermocellum).